A 138-amino-acid polypeptide reads, in one-letter code: Acidic phospholipase A2 VP7 (138 aa).

Residues 1–16 (MRTLWIVAVCLMGVEG) form the signal peptide. 7 disulfides stabilise this stretch: Cys42–Cys131, Cys44–Cys60, Cys59–Cys111, Cys65–Cys138, Cys66–Cys104, Cys73–Cys97, and Cys91–Cys102. Residues Tyr43, Gly45, and Gly47 each contribute to the Ca(2+) site. Residue His63 is part of the active site. Asp64 is a Ca(2+) binding site. Residue Asp105 is part of the active site.

This sequence belongs to the phospholipase A2 family. Group II subfamily. D49 sub-subfamily. In terms of assembly, does not form a complex. The cofactor is Ca(2+). Expressed by the venom gland.

The protein localises to the secreted. The catalysed reaction is a 1,2-diacyl-sn-glycero-3-phosphocholine + H2O = a 1-acyl-sn-glycero-3-phosphocholine + a fatty acid + H(+). Snake venom phospholipase A2 (PLA2) that is not toxic by itself, but the synergistical mixture of a basic and this acidic protein is lethal. PLA2 catalyzes the calcium-dependent hydrolysis of the 2-acyl groups in 3-sn-phosphoglycerides. In Daboia palaestinae (Palestine viper), this protein is Acidic phospholipase A2 VP7.